The chain runs to 226 residues: uncharacterized protein (226 aa).

The helical transmembrane segment at Ile-5 to Ile-25 threads the bilayer.

The protein localises to the cell membrane. This is an uncharacterized protein from Bacillus subtilis (strain 168).